We begin with the raw amino-acid sequence, 417 residues long: Serine hydroxymethyltransferase (417 aa).

(6S)-5,6,7,8-tetrahydrofolate contacts are provided by residues leucine 121 and 125 to 127 (GHL). The residue at position 229 (lysine 229) is an N6-(pyridoxal phosphate)lysine. (6S)-5,6,7,8-tetrahydrofolate is bound at residue 355 to 357 (SPF).

This sequence belongs to the SHMT family. Homodimer. The cofactor is pyridoxal 5'-phosphate.

The protein resides in the cytoplasm. It carries out the reaction (6R)-5,10-methylene-5,6,7,8-tetrahydrofolate + glycine + H2O = (6S)-5,6,7,8-tetrahydrofolate + L-serine. The protein operates within one-carbon metabolism; tetrahydrofolate interconversion. It functions in the pathway amino-acid biosynthesis; glycine biosynthesis; glycine from L-serine: step 1/1. Functionally, catalyzes the reversible interconversion of serine and glycine with tetrahydrofolate (THF) serving as the one-carbon carrier. This reaction serves as the major source of one-carbon groups required for the biosynthesis of purines, thymidylate, methionine, and other important biomolecules. Also exhibits THF-independent aldolase activity toward beta-hydroxyamino acids, producing glycine and aldehydes, via a retro-aldol mechanism. This chain is Serine hydroxymethyltransferase, found in Shewanella sp. (strain ANA-3).